A 190-amino-acid chain; its full sequence is Scytalone dehydratase-like protein Arp1 (190 aa).

Tyr67 serves as a coordination point for substrate. Active-site residues include His102 and His127. Substrate is bound at residue Asn148.

This sequence belongs to the scytalone dehydratase family. As to quaternary structure, homotrimer. Each subunit contains an active site, located in the central part of the hydrophobic core of the monomer, which functions independently.

Functionally, scytalone dehydratase-like protein; part of the Pks2 gene cluster that mediates the formation of infectious structures (appressoria), enabling these fungi to kill insects faster. The product of the Pks2 gene cluster is different from the one of Pks1 and has still not been identified. In Metarhizium anisopliae (strain ARSEF 549), this protein is Scytalone dehydratase-like protein Arp1.